Consider the following 347-residue polypeptide: UPF0284 protein LS215_0030 (347 aa).

It belongs to the UPF0284 family.

The protein is UPF0284 protein LS215_0030 of Saccharolobus islandicus (strain L.S.2.15 / Lassen #1) (Sulfolobus islandicus).